The primary structure comprises 668 residues: COBRA-like protein 11 (668 aa).

The signal sequence occupies residues Met1 to Ala29. Asn69, Asn125, Asn254, Asn318, Asn329, Asn358, Asn412, Asn432, Asn473, Asn552, Asn560, and Asn579 each carry an N-linked (GlcNAc...) asparagine glycan. Residue Ser636 is the site of GPI-anchor amidated serine attachment. Residues Ser637–Val668 constitute a propeptide, removed in mature form.

Belongs to the COBRA family. In terms of tissue distribution, mostly expressed in flowers, stamen, anthers and pollen, and, to a lower extent, possibly in roots, stems, leaves and siliques.

It is found in the cell membrane. In terms of biological role, involved in the deposition of apical pectin cap and cellulose microfibrils in pollen tubes. Implicated in pollen tubes growth in the female transmitting tract of pistil and toward micropyles, via the perception of ovule guidance cues. This chain is COBRA-like protein 11, found in Arabidopsis thaliana (Mouse-ear cress).